The following is a 239-amino-acid chain: Segregation and condensation protein A (239 aa).

The protein belongs to the ScpA family. Component of a cohesin-like complex composed of ScpA, ScpB and the Smc homodimer, in which ScpA and ScpB bind to the head domain of Smc. The presence of the three proteins is required for the association of the complex with DNA.

It localises to the cytoplasm. In terms of biological role, participates in chromosomal partition during cell division. May act via the formation of a condensin-like complex containing Smc and ScpB that pull DNA away from mid-cell into both cell halves. The sequence is that of Segregation and condensation protein A from Streptococcus suis (strain 98HAH33).